The following is a 213-amino-acid chain: mRNA-decapping protein D9 (213 aa).

A Nudix hydrolase domain is found at 30 to 209 (KDTHVFAACI…EYLSYIYNML (180 aa)). Positions 111-132 (GKLDKKESIKDCLRRELKEESD) match the Nudix box motif. A Mg(2+)-binding site is contributed by Glu-117. The Nucleophile role is filled by Glu-126. Residues Glu-130 and Asp-151 each contribute to the Mg(2+) site.

It belongs to the Nudix hydrolase family. The cofactor is Mg(2+). Mn(2+) serves as cofactor.

Functionally, decapping enzyme required for the removal of the 5'-end m7GpppN cap tethered to viral and host mRNAs to allow their decay in cells. May therefore accelerate viral and cellular mRNA turnover to eliminate competing host mRNAs and allow stage-specific synthesis of viral proteins. Acceleration of the turnover of cellular transcripts may even promote the shutoff of host protein synthesis. Does not cleave unmethylated RNAs or RNAs shorter than 24 nucleotides. This chain is mRNA-decapping protein D9, found in Homo sapiens (Human).